A 201-amino-acid chain; its full sequence is MLEKFTVIRGKAVPLRGEDIDTDRILPARFMKVLTFEGLGQYLFYDERFDEKGNPKPHPLNDPRYRGATILLVESGFGSGSSREHAPQAIKRAGFKAIIGESFAEIFFGNATAIGLPCVSLSPEDLGVLFRSVEENPELEVEIDLVNQEVRFGDRTAPLSIREEAREALVEGLWDPIGELLEAGELLDQFDQKLPYPRRTE.

The protein belongs to the LeuD family. LeuD type 1 subfamily. As to quaternary structure, heterodimer of LeuC and LeuD.

It carries out the reaction (2R,3S)-3-isopropylmalate = (2S)-2-isopropylmalate. The protein operates within amino-acid biosynthesis; L-leucine biosynthesis; L-leucine from 3-methyl-2-oxobutanoate: step 2/4. Its function is as follows. Catalyzes the isomerization between 2-isopropylmalate and 3-isopropylmalate, via the formation of 2-isopropylmaleate. This Thermus thermophilus (strain ATCC BAA-163 / DSM 7039 / HB27) protein is 3-isopropylmalate dehydratase small subunit.